We begin with the raw amino-acid sequence, 190 residues long: MSGLRPAISTFIFLLLITGGVYPLLTTVLGQWWFPWQANGSLIREGDTVRGSALIGQNFTDNGYFQGRPSATAEMPYNPQASGGSNLAVSNPELDKQIAARVAALRAANPDTSTSVPAELVTASASGLDNNITPQAAAWQIPRVAKARNLSVEQLTQLIAKYSQQPLVKYIGQPVVNIVELNLALDKLDE.

A helical membrane pass occupies residues 10 to 30 (TFIFLLLITGGVYPLLTTVLG).

The protein belongs to the KdpC family. The system is composed of three essential subunits: KdpA, KdpB and KdpC.

It is found in the cell inner membrane. Part of the high-affinity ATP-driven potassium transport (or Kdp) system, which catalyzes the hydrolysis of ATP coupled with the electrogenic transport of potassium into the cytoplasm. This subunit acts as a catalytic chaperone that increases the ATP-binding affinity of the ATP-hydrolyzing subunit KdpB by the formation of a transient KdpB/KdpC/ATP ternary complex. This Shigella dysenteriae serotype 1 (strain Sd197) protein is Potassium-transporting ATPase KdpC subunit.